The primary structure comprises 200 residues: Small ribosomal subunit protein uS4 (200 aa).

Positions 91–150 constitute an S4 RNA-binding domain; the sequence is TRLDNVVYRLGITPTRRSARQLVSHKHITVNGKIVNIPSYALKVGDIIGLTEKTKSSNAI.

This sequence belongs to the universal ribosomal protein uS4 family. In terms of assembly, part of the 30S ribosomal subunit. Contacts protein S5. The interaction surface between S4 and S5 is involved in control of translational fidelity.

One of the primary rRNA binding proteins, it binds directly to 16S rRNA where it nucleates assembly of the body of the 30S subunit. Functionally, with S5 and S12 plays an important role in translational accuracy. The chain is Small ribosomal subunit protein uS4 from Amoebophilus asiaticus (strain 5a2).